The chain runs to 451 residues: Uronate isomerase (451 aa).

Belongs to the metallo-dependent hydrolases superfamily. Uronate isomerase family.

The catalysed reaction is D-glucuronate = D-fructuronate. It catalyses the reaction aldehydo-D-galacturonate = keto-D-tagaturonate. Its pathway is carbohydrate metabolism; pentose and glucuronate interconversion. In Thermotoga petrophila (strain ATCC BAA-488 / DSM 13995 / JCM 10881 / RKU-1), this protein is Uronate isomerase.